We begin with the raw amino-acid sequence, 327 residues long: GTP 3',8-cyclase (327 aa).

Positions 4 to 226 constitute a Radical SAM core domain; the sequence is AFARDIHYLR…LRLGDHPGIR (223 aa). R13 contributes to the GTP binding site. Residues C20 and C24 each coordinate [4Fe-4S] cluster. Position 26 (Y26) interacts with S-adenosyl-L-methionine. C27 provides a ligand contact to [4Fe-4S] cluster. R63 is a binding site for GTP. Residue G67 participates in S-adenosyl-L-methionine binding. T94 serves as a coordination point for GTP. S118 provides a ligand contact to S-adenosyl-L-methionine. K155 is a GTP binding site. An S-adenosyl-L-methionine-binding site is contributed by M189. Residues C254 and C257 each contribute to the [4Fe-4S] cluster site. 259-261 provides a ligand contact to GTP; that stretch reads RLR. C271 provides a ligand contact to [4Fe-4S] cluster.

It belongs to the radical SAM superfamily. MoaA family. Monomer and homodimer. It depends on [4Fe-4S] cluster as a cofactor.

It catalyses the reaction GTP + AH2 + S-adenosyl-L-methionine = (8S)-3',8-cyclo-7,8-dihydroguanosine 5'-triphosphate + 5'-deoxyadenosine + L-methionine + A + H(+). Its pathway is cofactor biosynthesis; molybdopterin biosynthesis. Its function is as follows. Catalyzes the cyclization of GTP to (8S)-3',8-cyclo-7,8-dihydroguanosine 5'-triphosphate. This is GTP 3',8-cyclase from Heliobacterium modesticaldum (strain ATCC 51547 / Ice1).